A 445-amino-acid polypeptide reads, in one-letter code: Phosphoglucosamine mutase (445 aa).

The active-site Phosphoserine intermediate is Ser102. 4 residues coordinate Mg(2+): Ser102, Asp241, Asp243, and Asp245. A Phosphoserine modification is found at Ser102.

Belongs to the phosphohexose mutase family. The cofactor is Mg(2+). Activated by phosphorylation.

The enzyme catalyses alpha-D-glucosamine 1-phosphate = D-glucosamine 6-phosphate. Catalyzes the conversion of glucosamine-6-phosphate to glucosamine-1-phosphate. The sequence is that of Phosphoglucosamine mutase from Escherichia coli O157:H7.